Here is a 129-residue protein sequence, read N- to C-terminus: Protein BUNDLE SHEATH DEFECTIVE 2, chloroplastic (129 aa).

The N-terminal 43 residues, 1-43 (MAATASLTTTAPSPPALLKASAPLLISFRPVSRHCKNLCIKTK), are a transit peptide targeting the chloroplast. Residues 49–123 (QSAKKHQKVK…AGFLGGFLST (75 aa)) form a CR-type zinc finger. 10 residues coordinate Zn(2+): cysteine 62, cysteine 65, asparagine 68, cysteine 73, cysteine 76, cysteine 97, cysteine 100, glutamate 105, cysteine 108, and cysteine 111.

The protein belongs to the BSD2 chaperone family. Interacts with the RuBisCo large subunit (RbcL) assembled as an intermediate complex made of eight RbcL and eight BSD2 subunits. In terms of tissue distribution, expressed in shoot tissues, in both bundle sheath and mesophyll cells.

It is found in the plastid. The protein localises to the chloroplast stroma. Functionally, chloroplast chaperone required for RuBisCo complex biogenesis and translational regulation of the RuBisCo large subunit (RbcL). Stabilizes an end-state assembly intermediate of eight RbcL subunits until the small subunits (RBCSs) become available to produce a complete stable RuBisCo complex containing eight small and eight large subunits. Involved in the differentiation of bundle sheath cells, especially chloroplast structure. The protein is Protein BUNDLE SHEATH DEFECTIVE 2, chloroplastic of Zea mays (Maize).